A 1286-amino-acid chain; its full sequence is Protein patched (1286 aa).

Topologically, residues 1–76 are cytoplasmic; it reads MDRDSLPRVP…GSSVQKHAGK (76 aa). Residues 77–92 form a helical membrane-spanning segment; the sequence is VLFVAILVLSTFCVGL. The Extracellular portion of the chain corresponds to 93–427; the sequence is KSAQIHSKVH…DDILAKFSHP (335 aa). N-linked (GlcNAc...) asparagine glycosylation is found at Asn142, Asn298, Asn335, and Asn388. Residues 428–448 traverse the membrane as a helical segment; that stretch reads SALSIVIGVAVTVLYAFCTLL. Residues 428–583 form the SSD domain; it reads SALSIVIGVA…LLVFPAMISL (156 aa). Residues 449 to 465 are Cytoplasmic-facing; that stretch reads RWRDPVRGQSSVGVAGV. Residues 466-486 traverse the membrane as a helical segment; sequence LLMCFSTAAGLGLSALLGIVF. Topologically, residues 487–492 are extracellular; it reads NAASTQ. Residues 493–511 form a helical membrane-spanning segment; it reads VVPFLALGLGVDHIFMLTA. The Cytoplasmic portion of the chain corresponds to 512–532; that stretch reads AYAESNRREQTKLILKKVGPS. The chain crosses the membrane as a helical span at residues 533–553; sequence ILFSACSTAGSFFAAAFIPVP. The Extracellular portion of the chain corresponds to 554–562; sequence ALKVFCLQA. A helical transmembrane segment spans residues 563–583; the sequence is AIVMCSNLAAALLVFPAMISL. Topologically, residues 584-677 are cytoplasmic; sequence DLRRRTAGRA…QHYTPFLMRS (94 aa). Residues 678–699 form a helical membrane-spanning segment; that stretch reads WVKFLTVMGFLAALISSLYAST. The Extracellular segment spans residues 700–931; the sequence is RLQDGLDIID…IRDLSVKYEG (232 aa). Residue Asn807 is glycosylated (N-linked (GlcNAc...) asparagine). Residues 932 to 952 form a helical membrane-spanning segment; the sequence is FGLPNYPSGIPFIFWEQYMTL. At 953–955 the chain is on the cytoplasmic side; sequence RSS. A helical membrane pass occupies residues 956–976; that stretch reads LAMILACVLLAALVLVSLLLL. Over 977 to 1007 the chain is Extracellular; it reads SVWAAVLVILSVLASLAQIFGAMTLLGIKLS. A helical membrane pass occupies residues 1008 to 1028; sequence AIPAVILILSVGMMLCFNVLI. The Cytoplasmic portion of the chain corresponds to 1029–1056; the sequence is SLGFMTSVGNRQRRVQLSMQMSLGPLVH. A helical transmembrane segment spans residues 1057 to 1077; it reads GMLTSGVAVFMLSTSPFEFVI. The Extracellular portion of the chain corresponds to 1078–1082; that stretch reads RHFCW. A helical transmembrane segment spans residues 1083 to 1103; it reads LLLVVLCVGACNSLLVFPILL. Residues 1104-1286 lie on the Cytoplasmic side of the membrane; it reads SMVGPEAELV…RAVRSYNFTS (183 aa). Positions 1116–1237 are disordered; it reads EHPDRISTPS…PPPFPTAYPP (122 aa). Polar residues-rich tracts occupy residues 1141–1152 and 1165–1191; these read VQGSRSSRGSCQ and PSLT…NDWT. Residues 1199–1216 are compositionally biased toward low complexity; sequence PASYAAPPPAYHKAAAQQ. Residues 1224–1235 are compositionally biased toward pro residues; that stretch reads PTTPPPPFPTAY.

Belongs to the patched family. As to quaternary structure, interacts (via C-terminal cytoplasmic region) with CG5504/l(2)tid; the interaction is probably direct. Interacts with hh/hedgehog.

It localises to the membrane. Its function is as follows. Segmentation polarity protein. Acts as a receptor for the hedgehog protein (hh). Associates with the smoothened protein (SMO) to transduce the hedgehog signal leading to the activation of wingless, decapentaplegic and patched itself. Participates in cell interactions that establish pattern within the segment and the imaginal disks during development. In the absence of HH, represses the constitutive signaling activity of smo through fused (FU). This is Protein patched from Drosophila melanogaster (Fruit fly).